A 37-amino-acid chain; its full sequence is Large ribosomal subunit protein bL36 (37 aa).

This sequence belongs to the bacterial ribosomal protein bL36 family.

This chain is Large ribosomal subunit protein bL36, found in Aquifex aeolicus (strain VF5).